Reading from the N-terminus, the 308-residue chain is Cytochrome b (308 aa).

The next 4 helical transmembrane spans lie at 1–21, 45–66, 81–101, and 146–166; these read FGLL…LLAA, WLIR…YLHI, WNIG…GYVX, and FFAL…VHLT. Residues His-51 and His-65 each contribute to the heme b site. Residues His-150 and His-164 each coordinate heme b. His-169 contributes to the a ubiquinone binding site. A run of 3 helical transmembrane segments spans residues 194-214, 256-276, and 288-308; these read TKDV…ALFS, LGGV…PFLH, and LSQI…WVSN.

The protein belongs to the cytochrome b family. The cytochrome bc1 complex contains 11 subunits: 3 respiratory subunits (MT-CYB, CYC1 and UQCRFS1), 2 core proteins (UQCRC1 and UQCRC2) and 6 low-molecular weight proteins (UQCRH/QCR6, UQCRB/QCR7, UQCRQ/QCR8, UQCR10/QCR9, UQCR11/QCR10 and a cleavage product of UQCRFS1). This cytochrome bc1 complex then forms a dimer. Requires heme b as cofactor.

It is found in the mitochondrion inner membrane. In terms of biological role, component of the ubiquinol-cytochrome c reductase complex (complex III or cytochrome b-c1 complex) that is part of the mitochondrial respiratory chain. The b-c1 complex mediates electron transfer from ubiquinol to cytochrome c. Contributes to the generation of a proton gradient across the mitochondrial membrane that is then used for ATP synthesis. The protein is Cytochrome b (MT-CYB) of Pomatostomus ruficeps (Chestnut-crowned babbler).